A 171-amino-acid chain; its full sequence is Neuronal vesicle trafficking-associated protein 2 (171 aa).

The interval 1-21 (MVKLNGNPGEKGAKPPSVEDG) is disordered. The Cytoplasmic segment spans residues 1–71 (MVKLNGNPGE…FRVPKIAEFT (71 aa)). A helical; Signal-anchor for type II membrane protein membrane pass occupies residues 72–92 (VTILVSLALAFLACIVFLVVY). Residues 93 to 171 (KAFTYDHSCP…EPKPPKTQGH (79 aa)) lie on the Lumenal side of the membrane.

It belongs to the NSG family.

The protein localises to the membrane. Its subcellular location is the golgi apparatus. The protein resides in the trans-Golgi network membrane. It is found in the cell projection. It localises to the dendrite. The protein localises to the endosome membrane. Its subcellular location is the early endosome membrane. The protein resides in the late endosome membrane. It is found in the lysosome lumen. It localises to the cytoplasmic vesicle membrane. The protein localises to the golgi stack membrane. Its subcellular location is the endosome. The protein resides in the multivesicular body membrane. This is Neuronal vesicle trafficking-associated protein 2 from Rattus norvegicus (Rat).